The sequence spans 200 residues: MQKFIIHKGIACPLEYANIDTDQIIPKQFLLAVSKQGFGRHLFHDLRYLDDKESVLNMDFNLNKKEYQNSSILVSFENFGSGSSREHAPWALVDYGIRAIIAPSFADIFKNNALGNGLLTIELAKDEVLEIVDELKKSQDKNIEISLLEKRVFFKDKIFSFDLDNFHRICLLEGLDNIALTLKHEAQIKAYEKNSKSFLV.

The protein belongs to the LeuD family. LeuD type 1 subfamily. In terms of assembly, heterodimer of LeuC and LeuD.

It catalyses the reaction (2R,3S)-3-isopropylmalate = (2S)-2-isopropylmalate. The protein operates within amino-acid biosynthesis; L-leucine biosynthesis; L-leucine from 3-methyl-2-oxobutanoate: step 2/4. Catalyzes the isomerization between 2-isopropylmalate and 3-isopropylmalate, via the formation of 2-isopropylmaleate. This is 3-isopropylmalate dehydratase small subunit from Campylobacter jejuni (strain RM1221).